We begin with the raw amino-acid sequence, 413 residues long: Aminopeptidase PepS (413 aa).

Residues glutamate 253, glutamate 319, glutamate 343, histidine 348, histidine 381, and aspartate 383 each contribute to the a divalent metal cation site.

This sequence belongs to the peptidase M29 family. Monomer. Requires Co(2+) as cofactor. The cofactor is Zn(2+). Mg(2+) serves as cofactor.

In terms of biological role, exhibits a high specificity towards peptides possessing arginine or aromatic amino acids at the N-terminus. Could be involved both in bacterial growth by supplying amino acids. This Streptococcus thermophilus protein is Aminopeptidase PepS (pepS).